The chain runs to 661 residues: UvrABC system protein B (661 aa).

Positions 28–414 (KGVKEGKRHQ…HTDEMIEQII (387 aa)) constitute a Helicase ATP-binding domain. Residue 41-48 (GATGTGKT) participates in ATP binding. The Beta-hairpin signature appears at 94–117 (YYDYYQPEAYVPSTDTFIEKDASI). The Helicase C-terminal domain maps to 432–598 (QIDDLLSEIQ…TINKKIHDVI (167 aa)). Positions 604–625 (NDETNEKQQTELPKKMTKKERQ) are disordered. Positions 607–617 (TNEKQQTELPK) are enriched in basic and acidic residues. Positions 625–660 (QKTIENIEKEMKKAAKDLDFEKATELRDMLFELKSE) constitute a UVR domain.

This sequence belongs to the UvrB family. As to quaternary structure, forms a heterotetramer with UvrA during the search for lesions. Interacts with UvrC in an incision complex.

Its subcellular location is the cytoplasm. In terms of biological role, the UvrABC repair system catalyzes the recognition and processing of DNA lesions. A damage recognition complex composed of 2 UvrA and 2 UvrB subunits scans DNA for abnormalities. Upon binding of the UvrA(2)B(2) complex to a putative damaged site, the DNA wraps around one UvrB monomer. DNA wrap is dependent on ATP binding by UvrB and probably causes local melting of the DNA helix, facilitating insertion of UvrB beta-hairpin between the DNA strands. Then UvrB probes one DNA strand for the presence of a lesion. If a lesion is found the UvrA subunits dissociate and the UvrB-DNA preincision complex is formed. This complex is subsequently bound by UvrC and the second UvrB is released. If no lesion is found, the DNA wraps around the other UvrB subunit that will check the other stand for damage. The chain is UvrABC system protein B from Staphylococcus haemolyticus (strain JCSC1435).